The primary structure comprises 237 residues: MNSQTQMKQIVAEAAIEEVKSDMILGLGSGSTAVLMIKSLADAIRSGKLQNIKGVATSFQSEVLALELDIPLIDLASVSQIDLAIDGADEVDPGFQLIKGGGACHVREKLVASKANQLLIVVDETKLVRKLNQSFPLPVEVLPNAWKQVQEVISEMNGISTLRMATKKAGPVVTDQGNLILDVLFNDGIKNPKDIEKSINNIPGVLENGLFIDLTDKVLVGKIENNIPVAYSPAKVG.

Substrate is bound by residues 29 to 32, 86 to 89, and 99 to 102; these read SGST, DGAD, and KGGG. The Proton acceptor role is filled by glutamate 108. Residue lysine 126 coordinates substrate.

The protein belongs to the ribose 5-phosphate isomerase family. As to quaternary structure, homodimer.

The enzyme catalyses aldehydo-D-ribose 5-phosphate = D-ribulose 5-phosphate. The protein operates within carbohydrate degradation; pentose phosphate pathway; D-ribose 5-phosphate from D-ribulose 5-phosphate (non-oxidative stage): step 1/1. Its function is as follows. Catalyzes the reversible conversion of ribose-5-phosphate to ribulose 5-phosphate. The sequence is that of Ribose-5-phosphate isomerase A from Prochlorococcus marinus (strain MIT 9312).